The sequence spans 690 residues: Iron-sulfur clusters transporter ATM1, mitochondrial (690 aa).

A mitochondrion-targeting transit peptide spans 1–26 (MLLLPRCPVIGRIVRSKFRSGLIRNH). Topologically, residues 27–110 (SPVIFTVSKL…PKGNNKVRIR (84 aa)) are mitochondrial matrix. A helical transmembrane segment spans residues 111–132 (VLIALGLLISAKILNVQVPFFF). In terms of domain architecture, ABC transmembrane type-1 spans 111-401 (VLIALGLLIS…LGSVYRDLKQ (291 aa)). The Mitochondrial intermembrane portion of the chain corresponds to 133–155 (KQTIDSMNIAWDDPTVALPAAIG). A helical membrane pass occupies residues 156-179 (LTILCYGVARFGSVLFGELRNAVF). The Mitochondrial matrix segment spans residues 180–228 (AKVAQNAIRTVSLQTFQHLMKLDLGWHLSRQTGGLTRAMDRGTKGISQV). A helical transmembrane segment spans residues 229-252 (LTAMVFHIIPISFEISVVCGILTY). Glutamine 253 is a topological domain (mitochondrial intermembrane). The helical transmembrane segment at 254–274 (FGASFAAITFSTMLLYSIFTI) threads the bilayer. The Mitochondrial matrix segment spans residues 275–340 (KTTAWRTHFR…SQIKVSQSLA (66 aa)). Glutathione-binding positions include 280-284 (RTHFR) and 343-346 (NSGQ). Residues 341–359 (FLNSGQNLIFTTALTAMMY) form a helical membrane-spanning segment. Topologically, residues 360–374 (MGCTGVIGGNLTVGD) are mitochondrial intermembrane. Residues 375 to 396 (LVLINQLVFQLSVPLNFLGSVY) form a helical membrane-spanning segment. Residue glycine 393 coordinates glutathione. Residues 397–690 (RDLKQSLIDM…ENELKDQQEL (294 aa)) are Mitochondrial matrix-facing. In terms of domain architecture, ABC transporter spans 436–672 (ITFENVTFGY…PGSLYRELWT (237 aa)). ATP-binding positions include tyrosine 445 and 469 to 480 (GSSGSGKSTILK).

Belongs to the ABC transporter superfamily. ABCB family. Heavy Metal importer (TC 3.A.1.210) subfamily. As to quaternary structure, homodimer.

The protein resides in the mitochondrion inner membrane. In terms of biological role, performs an essential function in the generation of cytoplasmic iron-sulfur proteins by mediating the ATP-dependent export of Fe/S cluster precursors synthesized by NFS1 and other mitochondrial proteins. Hydrolyzes ATP. Binds glutathione and may function by transporting a glutathione-conjugated iron-sulfur compound. The chain is Iron-sulfur clusters transporter ATM1, mitochondrial from Saccharomyces cerevisiae (strain ATCC 204508 / S288c) (Baker's yeast).